The sequence spans 118 residues: NADH-ubiquinone oxidoreductase chain 3 (118 aa).

The next 3 helical transmembrane spans lie at 5 to 25 (YIYI…LIFL), 62 to 82 (LIAI…PWSI), and 87 to 107 (GSFF…VGFI).

It belongs to the complex I subunit 3 family.

It localises to the mitochondrion membrane. It catalyses the reaction a ubiquinone + NADH + 5 H(+)(in) = a ubiquinol + NAD(+) + 4 H(+)(out). Core subunit of the mitochondrial membrane respiratory chain NADH dehydrogenase (Complex I) that is believed to belong to the minimal assembly required for catalysis. Complex I functions in the transfer of electrons from NADH to the respiratory chain. The immediate electron acceptor for the enzyme is believed to be ubiquinone. The chain is NADH-ubiquinone oxidoreductase chain 3 (ND3) from Acanthamoeba castellanii (Amoeba).